We begin with the raw amino-acid sequence, 354 residues long: Protein RecA (354 aa).

67 to 74 is a binding site for ATP; the sequence is GPESSGKT.

It belongs to the RecA family.

The protein localises to the cytoplasm. In terms of biological role, can catalyze the hydrolysis of ATP in the presence of single-stranded DNA, the ATP-dependent uptake of single-stranded DNA by duplex DNA, and the ATP-dependent hybridization of homologous single-stranded DNAs. It interacts with LexA causing its activation and leading to its autocatalytic cleavage. This Yersinia enterocolitica serotype O:8 / biotype 1B (strain NCTC 13174 / 8081) protein is Protein RecA.